A 2248-amino-acid chain; its full sequence is Putative Polycomb group protein ASXL3 (2248 aa).

One can recognise an HTH HARE-type domain in the interval 10–84 (RTWAEAARLA…KSGLYALKKE (75 aa)). Residues 156 to 232 (ALKQALRQQQ…GKQTSQHLKR (77 aa)) form a disordered region. A compositionally biased stretch (basic and acidic residues) spans 203–216 (KNGEADSSDKEMKH). The segment covering 219–228 (KSPTGKQTSQ) has biased composition (polar residues). The DEUBAD domain maps to 254–363 (PGSILVNTNL…FERFYGEKLG (110 aa)). Disordered stretches follow at residues 368–414 (ESVK…PASP), 547–583 (TSSM…EGQF), 607–643 (CISE…CTPA), 703–726 (EASP…PLTS), 762–853 (ERMA…ASIP), 869–1052 (LQRT…TGAR), 1123–1152 (TSKE…ETKM), 1183–1203 (QQSL…VHSS), 1431–1462 (KLSA…GFAP), 1573–1596 (TAPS…ADTT), and 1990–2068 (LSPN…KRLS). Polar residues-rich tracts occupy residues 371 to 389 (KLTT…SCGT), 395 to 407 (SAQT…QPKS), 564 to 580 (AVET…SSLE), 607 to 617 (CISETSFSSES), and 624 to 643 (SLPS…CTPA). Over residues 796 to 818 (NLTSQQKNLSNTPEPIIMSSSSI) the composition is skewed to polar residues. Over residues 937–949 (SHTSKSSEPSKSP) the composition is skewed to low complexity. Basic and acidic residues-rich tracts occupy residues 950–968 (DGIR…KTAE), 975–987 (CKEK…DDQS), and 997–1008 (PEKEQPPREEPR). Positions 1036 to 1046 (RASTSTSVSGG) are enriched in polar residues. A compositionally biased stretch (pro residues) spans 2016–2046 (HPPPPPPPPPPPPLALPPPPPPPPPLPPPLP). A PHD-type; atypical zinc finger spans residues 2210–2247 (ELKCSCRLKAMIVCKGCGAFCHDDCIGPSKLCVACLVV).

The protein belongs to the Asx family. Core component of the polycomb repressive deubiquitinase (PR-DUB) complex, at least composed of BAP1, one of ASXL1, ASXL2 or (probably) ASXL3, and one of MBD5 or MBD6. Distinct combinations of ASXL and MBD proteins may preferentially bind specific histone modification marks. The PR-DUB core associates with a number of accessory proteins, including FOXK1, FOXK2, KDM1B, HCFC1 and OGT; KDM1B specifically associates with ASXL2 PR-DUB complexes. Interacts (via PHD domain) with MBD5 and MBD6 (via MBD domain); the interaction is probably direct and mediates association of MBD proteins with the PR-DUB core. As to expression, expressed in pancreatic islets, testis, neuroblastoma, head and neck tumor.

Its subcellular location is the nucleus. Its function is as follows. Putative Polycomb group (PcG) protein. PcG proteins act by forming multiprotein complexes, which are required to maintain the transcriptionally repressive state of homeotic genes throughout development. PcG proteins are not required to initiate repression, but to maintain it during later stages of development. They probably act via methylation of histones, rendering chromatin heritably changed in its expressibility. Non-catalytic component of the PR-DUB complex, a complex that specifically mediates deubiquitination of histone H2A monoubiquitinated at 'Lys-119' (H2AK119ub1). The PR-DUB complex is an epigenetic regulator of gene expression and acts as a transcriptional coactivator, affecting genes involved in development, cell communication, signaling, cell proliferation and cell viability. ASXL1, ASXL2 and ASXL3 function redundantly in the PR-DUB complex and are essential for chromatin recruitment and transcriptional activation of associated genes. The sequence is that of Putative Polycomb group protein ASXL3 (ASXL3) from Homo sapiens (Human).